We begin with the raw amino-acid sequence, 194 residues long: 7-methyl-GTP pyrophosphatase (194 aa).

Aspartate 70 (proton acceptor) is an active-site residue.

This sequence belongs to the Maf family. YceF subfamily. Requires a divalent metal cation as cofactor.

The protein localises to the cytoplasm. The catalysed reaction is N(7)-methyl-GTP + H2O = N(7)-methyl-GMP + diphosphate + H(+). Its function is as follows. Nucleoside triphosphate pyrophosphatase that hydrolyzes 7-methyl-GTP (m(7)GTP). May have a dual role in cell division arrest and in preventing the incorporation of modified nucleotides into cellular nucleic acids. In Ralstonia nicotianae (strain ATCC BAA-1114 / GMI1000) (Ralstonia solanacearum), this protein is 7-methyl-GTP pyrophosphatase.